The following is a 231-amino-acid chain: Peroxisomal membrane protein 11E (231 aa).

Residues 1 to 91 lie on the Cytoplasmic side of the membrane; the sequence is MTTLDLTRAE…LPLVLLGKSK (91 aa). Residues 92–108 form a helical membrane-spanning segment; that stretch reads NALLSTFLFLDQIVWLG. Over 109–202 the chain is Lumenal; that stretch reads RSGIYKNKER…LLQLAPKTIS (94 aa). A helical transmembrane segment spans residues 203-222; it reads PRVTGAFGFTTSLISCYQLL. The Cytoplasmic portion of the chain corresponds to 223–231; the sequence is PSRPKLKTP.

Belongs to the peroxin-11 family. As to quaternary structure, homooligomer. Interacts with ARC5 and FIS1B on peroxisomes. Expressed in leaves and developing siliques.

It is found in the peroxisome membrane. Involved in peroxisomal proliferation. Promotes peroxisomal duplication, aggregation or elongation without fission. The chain is Peroxisomal membrane protein 11E (PEX11E) from Arabidopsis thaliana (Mouse-ear cress).